We begin with the raw amino-acid sequence, 118 residues long: uncharacterized protein (118 aa).

Belongs to the Lactobacillus delbrueckii bacteriophages ORF5 protein family.

This is an uncharacterized protein from Lactobacillus delbrueckii (Lactococcus delbrueckii bacteriophage LL-H).